Here is a 1268-residue protein sequence, read N- to C-terminus: Meiosis inhibitor protein 1 (1268 aa).

As to expression, strongly expressed in testis, weakly in brain, and not detected in spleen, liver, kidney, small intestine or colon.

Required for normal meiotic chromosome synapsis. May be involved in the formation of meiotic double-strand breaks (DSBs) in spermatocytes. This Mus musculus (Mouse) protein is Meiosis inhibitor protein 1.